A 63-amino-acid polypeptide reads, in one-letter code: Large ribosomal subunit protein bL32 (63 aa).

It belongs to the bacterial ribosomal protein bL32 family.

The chain is Large ribosomal subunit protein bL32 from Acholeplasma laidlawii.